Reading from the N-terminus, the 605-residue chain is NADH-ubiquinone oxidoreductase chain 5 (605 aa).

15 consecutive transmembrane segments (helical) span residues 8 to 28 (TLLSLLILTVPIMASNFYPYT), 34 to 54 (IYVKTMVSYAFLVSLIPTMIF), 87 to 107 (MILMPVALSVTWSIMEFSMWY), 117 to 137 (FFKYLLLFLITMMLLVTANNL), 140 to 160 (LFIGWEGVGIMSFLLIGWWYG), 171 to 191 (AILYNRIGDVGFLVAMAWFLF), 241 to 261 (TPVSALLHSSTMVVAGIFLLI), 273 to 293 (IQTMMLCLGAITTLFTAICAL), 301 to 321 (IVAFSTSSQLGLMMVTVGINQ), 324 to 344 (LAFLHICTHAFFKAMLFLCSG), 366 to 386 (LPFTTTALITGSLALTGMPFL), 409 to 429 (LFITLIATSLTAVYSTRIIYF), 457 to 477 (LLVGSIFAGFFISNNITPTTI), 482 to 502 (MPTYLKTTAMLVTLLGFIVAL), and 584 to 604 (IKLYFLSFLITLTLSLIMLNF).

The protein belongs to the complex I subunit 5 family. Core subunit of respiratory chain NADH dehydrogenase (Complex I) which is composed of 45 different subunits.

It localises to the mitochondrion inner membrane. It carries out the reaction a ubiquinone + NADH + 5 H(+)(in) = a ubiquinol + NAD(+) + 4 H(+)(out). In terms of biological role, core subunit of the mitochondrial membrane respiratory chain NADH dehydrogenase (Complex I) which catalyzes electron transfer from NADH through the respiratory chain, using ubiquinone as an electron acceptor. Essential for the catalytic activity and assembly of complex I. The chain is NADH-ubiquinone oxidoreductase chain 5 (MT-ND5) from Rousettus amplexicaudatus (Common rousette).